The sequence spans 620 residues: Sodium-dependent dopamine transporter (620 aa).

The Cytoplasmic segment spans residues 1–56; it reads MSKSKCSVGLMSSVVAPAKEPNAMGPKEVELILVKEQNGVQLTSSTLTNPRQSPVE. The chain crosses the membrane as a discontinuously helical span at residues 57–95; sequence AQDRETWGKKIDFLLSVIGFAVDLANVWRFPYLCYKNGG. Positions 75, 77, 78, 79, and 82 each coordinate Na(+). Residue D79 coordinates dopamine. A run of 2 helical transmembrane segments spans residues 96 to 127 and 128 to 171; these read GAFL…NREG and AAGV…FSSF. Dopamine-binding residues include S149 and G153. The Extracellular portion of the chain corresponds to 172-236; the sequence is TTELPWIHCN…SHGIDDLGPP (65 aa). C180 and C189 are oxidised to a cystine. N-linked (GlcNAc...) asparagine glycans are attached at residues N181, N188, and N205. The next 2 membrane-spanning stretches (helical) occupy residues 237-256 and 257-287; these read RWQL…FSLW and KGVK…GVTL. Residues 288–306 are Extracellular-facing; it reads PGAIDGIRAYLSVDFYRLC. A discontinuously helical transmembrane segment spans residues 307-335; the sequence is EASVWIDAATQVCFSLGVGFGVLIAFSSY. Q317 lines the chloride pocket. F320 is a binding site for dopamine. The Na(+) site is built by S321 and N353. S321 provides a ligand contact to chloride. Residues 336–376 traverse the membrane as a helical segment; that stretch reads NKFTNNCYRDAIVTTSINSLTSFSSGFVVFSFLGYMAQKHS. S357 contacts chloride. Over 377 to 400 the chain is Extracellular; it reads VPIGDVAKDGPGLIFIIYPEAIAT. Helical transmembrane passes span 401–442, 443–466, and 467–499; these read LPLS…QLLH, RHRE…CVTN, and GGIY…AWFY. Na(+) contacts are provided by L418, D421, and S422. Dopamine contacts are provided by S422 and A423. Over 500-516 the chain is Cytoplasmic; that stretch reads GVGQFSDDIQQMTGQRP. The helical transmembrane segment at 517-542 threads the bilayer; the sequence is SLYWRLCWKLVSPCFLLFVVVVSIVT. Residues 543–553 lie on the Extracellular side of the membrane; that stretch reads FRPPHYGAYIF. The chain crosses the membrane as a helical span at residues 554-583; sequence PDWANALGWVIATSSMAMVPIYAAYKFCSL. The interaction with TGFB1I1 stretch occupies residues 561 to 590; the sequence is GWVIATSSMAMVPIYAAYKFCSLPGSFREK. Residues 584-620 lie on the Cytoplasmic side of the membrane; that stretch reads PGSFREKLAYAIAPEKDRELVDRGEVRQFTLRHWLKV.

Belongs to the sodium:neurotransmitter symporter (SNF) (TC 2.A.22) family. SLC6A3 subfamily. Monomer. Homooligomer; disulfide-linked. Interacts with PRKCABP and TGFB1I1. Interacts (via N-terminus) with SYNGR3 (via N-terminus). Interacts with SLC18A2. Interacts with TOR1A (ATP-bound); TOR1A regulates SLC6A3 subcellular location. Interacts with alpha-synuclein/SNCA. Interacts with SEPTIN4.

The protein resides in the cell membrane. Its subcellular location is the cell projection. The protein localises to the neuron projection. It localises to the axon. It catalyses the reaction dopamine(out) + chloride(out) + Na(+)(out) = dopamine(in) + chloride(in) + Na(+)(in). The enzyme catalyses (R)-noradrenaline(out) + chloride(out) + Na(+)(out) = (R)-noradrenaline(in) + chloride(in) + Na(+)(in). It carries out the reaction dopamine(out) + chloride(out) + 2 Na(+)(out) = dopamine(in) + chloride(in) + 2 Na(+)(in). With respect to regulation, inhibited by zinc ions. Functionally, mediates sodium- and chloride-dependent transport of dopamine. Also mediates sodium- and chloride-dependent transport of norepinephrine (also known as noradrenaline). Regulator of light-dependent retinal hyaloid vessel regression, downstream of OPN5 signaling. This is Sodium-dependent dopamine transporter (SLC6A3) from Macaca fascicularis (Crab-eating macaque).